A 482-amino-acid chain; its full sequence is Putative L-cysteine desulfhydrase 1 (482 aa).

A compositionally biased stretch (acidic residues) spans 1–10 (MASIPPDDDA). The tract at residues 1-45 (MASIPPDDDAAAAAAAGAAENGYGNGKGNGNGPAPRPPPAKRPRS) is disordered. Over residues 11–22 (AAAAAAGAAENG) the composition is skewed to low complexity. Lys276 carries the N6-(pyridoxal phosphate)lysine modification.

It belongs to the class-V pyridoxal-phosphate-dependent aminotransferase family. Requires pyridoxal 5'-phosphate as cofactor.

The enzyme catalyses L-cysteine + H2O = hydrogen sulfide + pyruvate + NH4(+) + H(+). Functionally, catalyzes the production of hydrogen sulfide (H2S) from cysteine. The chain is Putative L-cysteine desulfhydrase 1 from Oryza sativa subsp. japonica (Rice).